The chain runs to 249 residues: Methyl-coenzyme M reductase I subunit gamma (249 aa).

R120 contacts coenzyme M.

Belongs to the methyl-coenzyme M reductase gamma subunit family. In terms of assembly, MCR is a hexamer of two alpha, two beta, and two gamma chains, forming a dimer of heterotrimers. Coenzyme F430 is required as a cofactor.

The protein resides in the cytoplasm. The enzyme catalyses coenzyme B + methyl-coenzyme M = methane + coenzyme M-coenzyme B heterodisulfide. It participates in one-carbon metabolism; methyl-coenzyme M reduction; methane from methyl-coenzyme M: step 1/1. Methyl-coenzyme M reductase activity is inhibited by 3-nitrooxypropanol (3-NOP) in vitro and in vivo, by oxidation of its active site Ni(I), which stops both growth and methanogenesis. Is also inhibited by the reaction product CoM-S-S-CoB. Functionally, component of the methyl-coenzyme M reductase (MCR) I that catalyzes the reductive cleavage of methyl-coenzyme M (CoM-S-CH3 or 2-(methylthio)ethanesulfonate) using coenzyme B (CoB or 7-mercaptoheptanoylthreonine phosphate) as reductant which results in the production of methane and the mixed heterodisulfide of CoB and CoM (CoM-S-S-CoB). This is the final step in methanogenesis. Neither N-6-mercaptohexanoylthreonine phosphate (H-S-HxoTP) nor N-8-mercaptooctanoylthreonine phosphate (H-SOcoTP) nor any other thiol compound such as CoA or CoM can substitute for CoB as the electron donor. The chain is Methyl-coenzyme M reductase I subunit gamma (mcrG) from Methanothermobacter marburgensis (strain ATCC BAA-927 / DSM 2133 / JCM 14651 / NBRC 100331 / OCM 82 / Marburg) (Methanobacterium thermoautotrophicum).